The primary structure comprises 496 residues: Probable cytosol aminopeptidase (496 aa).

Mn(2+)-binding residues include K262 and D267. Residue K274 is part of the active site. The Mn(2+) site is built by D285, D344, and E346. Residue R348 is part of the active site.

Belongs to the peptidase M17 family. Mn(2+) is required as a cofactor.

It is found in the cytoplasm. The enzyme catalyses Release of an N-terminal amino acid, Xaa-|-Yaa-, in which Xaa is preferably Leu, but may be other amino acids including Pro although not Arg or Lys, and Yaa may be Pro. Amino acid amides and methyl esters are also readily hydrolyzed, but rates on arylamides are exceedingly low.. It catalyses the reaction Release of an N-terminal amino acid, preferentially leucine, but not glutamic or aspartic acids.. In terms of biological role, presumably involved in the processing and regular turnover of intracellular proteins. Catalyzes the removal of unsubstituted N-terminal amino acids from various peptides. This chain is Probable cytosol aminopeptidase, found in Rhizobium etli (strain CIAT 652).